The sequence spans 197 residues: GTP cyclohydrolase-2 (197 aa).

GTP is bound at residue 50-54; that stretch reads RIHSE. The Zn(2+) site is built by cysteine 55, cysteine 66, and cysteine 68. GTP contacts are provided by residues glutamine 71, 93–95, and threonine 115; that span reads EGR. The Proton acceptor role is filled by aspartate 127. Catalysis depends on arginine 129, which acts as the Nucleophile. Positions 150 and 155 each coordinate GTP.

The protein belongs to the GTP cyclohydrolase II family. It depends on Zn(2+) as a cofactor.

It carries out the reaction GTP + 4 H2O = 2,5-diamino-6-hydroxy-4-(5-phosphoribosylamino)-pyrimidine + formate + 2 phosphate + 3 H(+). The protein operates within cofactor biosynthesis; riboflavin biosynthesis; 5-amino-6-(D-ribitylamino)uracil from GTP: step 1/4. Functionally, catalyzes the conversion of GTP to 2,5-diamino-6-ribosylamino-4(3H)-pyrimidinone 5'-phosphate (DARP), formate and pyrophosphate. The polypeptide is GTP cyclohydrolase-2 (Aeromonas hydrophila subsp. hydrophila (strain ATCC 7966 / DSM 30187 / BCRC 13018 / CCUG 14551 / JCM 1027 / KCTC 2358 / NCIMB 9240 / NCTC 8049)).